The following is a 200-amino-acid chain: ADP-ribosylation factor-like protein 4D (200 aa).

A lipid anchor (N-myristoyl glycine) is attached at G2. Residues G27 to T34, D75 to Q79, and N134 to D137 contribute to the GTP site.

The protein belongs to the small GTPase superfamily. Arf family. As to quaternary structure, interacts with CYTH2; the interaction is direct and ARL4D GTP-dependent. Does not interact with ARL4D.

The protein resides in the nucleus. It localises to the nucleolus. Its subcellular location is the cell membrane. It is found in the cytoplasm. Its function is as follows. Small GTP-binding protein which cycles between an inactive GDP-bound and an active GTP-bound form, and the rate of cycling is regulated by guanine nucleotide exchange factors (GEF) and GTPase-activating proteins (GAP). GTP-binding protein that does not act as an allosteric activator of the cholera toxin catalytic subunit. Recruits CYTH1, CYTH2, CYTH3 and CYTH4 to the plasma membrane in GDP-bound form. This Bos taurus (Bovine) protein is ADP-ribosylation factor-like protein 4D (ARL4D).